The primary structure comprises 48 residues: Small, acid-soluble spore protein N (48 aa).

A disordered region spans residues 1–48; it reads MMGREHDKQAQFTPDHLGTKPVAYKRNKGKKMHNKSNEQPDVIQTKGE. Residues 23-34 show a composition bias toward basic residues; that stretch reads AYKRNKGKKMHN.

It belongs to the SspN family.

It is found in the spore core. The chain is Small, acid-soluble spore protein N from Bacillus pumilus (strain SAFR-032).